Reading from the N-terminus, the 549-residue chain is Cation/acetate symporter ActP (549 aa).

Helical transmembrane passes span 33–53 (WQAI…TYWA), 77–97 (LAIA…ALVF), 103–123 (GLIY…LIAE), 148–168 (ILSA…QMVG), 183–203 (IAVV…GMLA), 206–226 (WVQI…AFMV), 262–282 (ISAL…PHIL), 303–323 (GFMG…IMLV), 355–375 (LFLG…VAGL), 404–424 (VSKI…VLFE), 428–448 (IAFM…PIIL), 464–484 (GGWL…TIWV), and 493–513 (IFPY…GIWF).

The protein belongs to the sodium:solute symporter (SSF) (TC 2.A.21) family.

The protein resides in the cell inner membrane. Its function is as follows. Transports acetate. The protein is Cation/acetate symporter ActP of Escherichia coli (strain ATCC 8739 / DSM 1576 / NBRC 3972 / NCIMB 8545 / WDCM 00012 / Crooks).